A 263-amino-acid chain; its full sequence is S-adenosylmethionine decarboxylase proenzyme (263 aa).

S113 functions as the Schiff-base intermediate with substrate; via pyruvic acid in the catalytic mechanism. A Pyruvic acid (Ser); by autocatalysis modification is found at S113. H118 acts as the Proton acceptor; for processing activity in catalysis. C141 acts as the Proton donor; for catalytic activity in catalysis.

The protein belongs to the prokaryotic AdoMetDC family. Type 2 subfamily. Heterooctamer of four alpha and four beta chains arranged as a tetramer of alpha/beta heterodimers. Requires pyruvate as cofactor. Post-translationally, is synthesized initially as an inactive proenzyme. Formation of the active enzyme involves a self-maturation process in which the active site pyruvoyl group is generated from an internal serine residue via an autocatalytic post-translational modification. Two non-identical subunits are generated from the proenzyme in this reaction, and the pyruvate is formed at the N-terminus of the alpha chain, which is derived from the carboxyl end of the proenzyme. The post-translation cleavage follows an unusual pathway, termed non-hydrolytic serinolysis, in which the side chain hydroxyl group of the serine supplies its oxygen atom to form the C-terminus of the beta chain, while the remainder of the serine residue undergoes an oxidative deamination to produce ammonia and the pyruvoyl group blocking the N-terminus of the alpha chain.

It catalyses the reaction S-adenosyl-L-methionine + H(+) = S-adenosyl 3-(methylsulfanyl)propylamine + CO2. Its pathway is amine and polyamine biosynthesis; S-adenosylmethioninamine biosynthesis; S-adenosylmethioninamine from S-adenosyl-L-methionine: step 1/1. Its function is as follows. Catalyzes the decarboxylation of S-adenosylmethionine to S-adenosylmethioninamine (dcAdoMet), the propylamine donor required for the synthesis of the polyamines spermine and spermidine from the diamine putrescine. The chain is S-adenosylmethionine decarboxylase proenzyme from Marinobacter nauticus (strain ATCC 700491 / DSM 11845 / VT8) (Marinobacter aquaeolei).